Here is a 504-residue protein sequence, read N- to C-terminus: Maturase K (504 aa).

Belongs to the intron maturase 2 family. MatK subfamily.

The protein resides in the plastid. It is found in the chloroplast. Usually encoded in the trnK tRNA gene intron. Probably assists in splicing its own and other chloroplast group II introns. This is Maturase K from Arabidopsis thaliana (Mouse-ear cress).